Here is a 584-residue protein sequence, read N- to C-terminus: 2-succinyl-5-enolpyruvyl-6-hydroxy-3-cyclohexene-1-carboxylate synthase (584 aa).

The protein belongs to the TPP enzyme family. MenD subfamily. In terms of assembly, homodimer. The cofactor is Mg(2+). Mn(2+) is required as a cofactor. It depends on thiamine diphosphate as a cofactor.

It carries out the reaction isochorismate + 2-oxoglutarate + H(+) = 5-enolpyruvoyl-6-hydroxy-2-succinyl-cyclohex-3-ene-1-carboxylate + CO2. Its pathway is quinol/quinone metabolism; 1,4-dihydroxy-2-naphthoate biosynthesis; 1,4-dihydroxy-2-naphthoate from chorismate: step 2/7. It participates in quinol/quinone metabolism; menaquinone biosynthesis. Its function is as follows. Catalyzes the thiamine diphosphate-dependent decarboxylation of 2-oxoglutarate and the subsequent addition of the resulting succinic semialdehyde-thiamine pyrophosphate anion to isochorismate to yield 2-succinyl-5-enolpyruvyl-6-hydroxy-3-cyclohexene-1-carboxylate (SEPHCHC). The polypeptide is 2-succinyl-5-enolpyruvyl-6-hydroxy-3-cyclohexene-1-carboxylate synthase (Bacillus cereus (strain ZK / E33L)).